Consider the following 414-residue polypeptide: MSYYIAPRFLDKLAVHITKNFLNIPGVRVPLILGIHGRKGEGKTFQCELAFEKMGIEVTLISGGELESPDAGDPARLIRLRYRETAELIKVRGKMCVLMINDLDAGAGRFDEGTQYTVNTQLVNATLMNIADNPTDVQLPGSYDSNPIRRVPIIVTGNDFSTLYAPLIRDGRMEKFYWEPNRDDKVGIVGGIFAEDGLSQREIEQLVDTFPKQSIDFFSALRSRIYDIQIRDFIHKVGFERISLRVVNSLEAPPEFKKPDFSLAHLIESGNLVLGEQQRVDNSQLVDEYNRLNRGRGYQTAPPPEAPVIQPVNNSSHKQKTSNTHLSLETQEQIRQILSQGHKITFEHVDARRFRTGSWQSCGTLHIDAESDAISTLEACLVDYDGEYVRMVGIDPKGKRRVVETIIQRPNGKN.

Position 37 to 44 (37 to 44) interacts with ATP; the sequence is GRKGEGKT. The disordered stretch occupies residues 296-326; that stretch reads RGYQTAPPPEAPVIQPVNNSSHKQKTSNTHL. The segment covering 311-326 has biased composition (polar residues); it reads PVNNSSHKQKTSNTHL.

Belongs to the RuBisCO activase family.

In terms of biological role, activation of RuBisCO (ribulose-1,5-bisohosphate carboxylase/oxygenase; EC 4.1.1.39) involves the ATP-dependent carboxylation of the epsilon-amino group of lysine leading to a carbamate structure. This is Ribulose bisphosphate carboxylase/oxygenase activase (rca) from Nostoc sp. (strain PCC 7120 / SAG 25.82 / UTEX 2576).